The following is a 276-amino-acid chain: CTD small phosphatase-like protein (276 aa).

The disordered stretch occupies residues Met1–Asn31. An FCP1 homology domain is found at Leu102–Leu260. The active-site 4-aspartylphosphate intermediate is the Asp112. Positions 112, 114, and 223 each coordinate Mg(2+). The Proton donor role is filled by Asp114.

As to quaternary structure, monomer. Interacts with REST. The cofactor is Mg(2+).

It localises to the nucleus. It catalyses the reaction O-phospho-L-seryl-[protein] + H2O = L-seryl-[protein] + phosphate. The enzyme catalyses O-phospho-L-threonyl-[protein] + H2O = L-threonyl-[protein] + phosphate. Preferentially catalyzes the dephosphorylation of 'Ser-5' within the tandem 7 residue repeats in the C-terminal domain (CTD) of the largest RNA polymerase II subunit POLR2A. Negatively regulates RNA polymerase II transcription, possibly by controlling the transition from initiation/capping to processive transcript elongation. Recruited by REST to neuronal genes that contain RE-1 elements, leading to neuronal gene silencing in non-neuronal cells. The protein is CTD small phosphatase-like protein (Ctdspl) of Mus musculus (Mouse).